Here is a 259-residue protein sequence, read N- to C-terminus: L-ornithine N(alpha)-acyltransferase (259 aa).

Belongs to the acetyltransferase family. OlsB subfamily.

It catalyses the reaction a (3R)-hydroxyacyl-[ACP] + L-ornithine = a lyso-ornithine lipid + holo-[ACP] + H(+). The protein operates within lipid metabolism. In terms of biological role, catalyzes the first step in the biosynthesis of ornithine lipids, which are phosphorus-free membrane lipids. Catalyzes the 3-hydroxyacyl-acyl carrier protein-dependent acylation of ornithine to form lyso-ornithine lipid (LOL). This chain is L-ornithine N(alpha)-acyltransferase, found in Rhodobacter capsulatus (strain ATCC BAA-309 / NBRC 16581 / SB1003).